Here is a 481-residue protein sequence, read N- to C-terminus: Transcription factor TGA9 (481 aa).

The disordered stretch occupies residues 91 to 181 (QTLPTESSKS…GKQLDAKTLR (91 aa)). A compositionally biased stretch (low complexity) spans 97 to 109 (SSKSGGESSDSGS). Residues 110–126 (ANFSGKAESQQPESPMS) show a composition bias toward polar residues. Residues 143 to 155 (SSSTSGLPSTSRT) show a composition bias toward low complexity. The Nuclear localization signal signature appears at 165 to 172 (KRKATTSG). The 45-residue stretch at 176–220 (DAKTLRRLAQNREAARKSRLRKKAYVQQLESSRIKLSQLEQELQR) folds into the bZIP domain. The segment at 178–198 (KTLRRLAQNREAARKSRLRKK) is basic motif. Residues 204 to 218 (LESSRIKLSQLEQEL) form a leucine-zipper region. One can recognise a DOG1 domain in the interval 242–450 (AAIFDMEYGR…RALSSLWLSR (209 aa)).

This sequence belongs to the bZIP family. In terms of assembly, homodimer. Binds DNA as a dimer. Interacts with floral glutaredoxins GRXC7/ROXY1 and GRXC8/ROXY2 in the nucleus. Interacts with TGA1, TGA2, TGA3, TGA4, TGA5, TGA6, TGA7, TGA10 and PAN. As to expression, mostly expressed in stems, inflorescence apex and flowers, and, to a lower extent, in seedlings, leaves and siliques.

It is found in the nucleus. Functionally, together with TGA10, basic leucine-zipper transcription factor required for anther development, probably via the activation of SPL expression in anthers and via the regulation of genes with functions in early and middle tapetal development. Required for signaling responses to pathogen-associated molecular patterns (PAMPs) such as flg22 that involves chloroplastic reactive oxygen species (ROS) production and subsequent expression of H(2)O(2)-responsive genes. The chain is Transcription factor TGA9 from Arabidopsis thaliana (Mouse-ear cress).